A 340-amino-acid polypeptide reads, in one-letter code: Integral membrane protein SED5 (340 aa).

At 1 to 319 (MNIKDRTSEF…KYFDRIKSNR (319 aa)) the chain is on the cytoplasmic side. The disordered stretch occupies residues 31–51 (RLQEKESENFANNTTGNGKSV). Residues 39 to 51 (NFANNTTGNGKSV) are compositionally biased toward polar residues. Positions 146-173 (LNTQMKNISGSFKDVLEERQRLEMANKD) form a coiled coil. A disordered region spans residues 180–231 (TDTGHAPADDQTQSNHAADLTTYNNSNPFMTSLLDESSEKNNNSSNQGELSF). Residues 189-209 (DQTQSNHAADLTTYNNSNPFM) are compositionally biased toward polar residues. One can recognise a t-SNARE coiled-coil homology domain in the interval 249 to 311 (NVYLQERNRA…SGAQRELLKY (63 aa)). A helical; Anchor for type IV membrane protein membrane pass occupies residues 320–340 (WLAAKVFFIIFVFFVIWVLVN).

It belongs to the syntaxin family. In terms of assembly, interacts with SLY1, STF1, SFB3 and GOS1.

It localises to the membrane. Its subcellular location is the golgi apparatus membrane. Required for vesicular transport between the endoplasmic reticulum and the Golgi complex. Acts as a target organelle soluble NSF attachment protein receptor (t-SNARE). The chain is Integral membrane protein SED5 (SED5) from Saccharomyces cerevisiae (strain ATCC 204508 / S288c) (Baker's yeast).